The primary structure comprises 988 residues: Chitin synthase 1 (988 aa).

The segment at 29–75 is disordered; that stretch reads QHHWPPSSGSSLGRAPSIPLSSSNPRSPIRPSTPSRVSTDWTRPPAP. The segment covering 44-66 has biased composition (low complexity); that stretch reads PSIPLSSSNPRSPIRPSTPSRVS. The next 7 membrane-spanning stretches (helical) occupy residues 577 to 596, 616 to 636, 656 to 676, 732 to 752, 764 to 784, 864 to 884, and 911 to 931; these read WLNG…KQIW, FISL…FYFV, IFVI…ILSL, IFTN…LMSF, SAQY…YAFC, YVVA…SEAY, and AIGS…EGRI. The segment at 950–988 is disordered; it reads AGLGSGFSESGKTGITSGSGMSGMSLSDVTSKISEKLAG. Residues 957 to 976 show a composition bias toward low complexity; the sequence is SESGKTGITSGSGMSGMSLS.

The protein belongs to the chitin synthase family. Class II subfamily.

It localises to the cell membrane. The enzyme catalyses [(1-&gt;4)-N-acetyl-beta-D-glucosaminyl](n) + UDP-N-acetyl-alpha-D-glucosamine = [(1-&gt;4)-N-acetyl-beta-D-glucosaminyl](n+1) + UDP + H(+). Polymerizes chitin, a structural polymer of the cell wall and septum, by transferring the sugar moiety of UDP-GlcNAc to the non-reducing end of the growing chitin polymer. CHS1 mainly responsible for normal yeast cell reproductive growth. The polypeptide is Chitin synthase 1 (Exophiala dermatitidis (Black yeast-like fungus)).